The chain runs to 335 residues: Deoxyhypusine hydroxylase (335 aa).

HEAT-like PBS-type repeat units follow at residues 71–97, 104–130, 200–233, 238–264, and 271–298; these read LKHELAYCLGQTRNPESVPFLQQVAKD, CRHEAAEALGALGYEDSLEILKALRDN, LRYRAMFALRDLASPPDLPTATRAVEALAKGLKD, FRHEIAFVFGQLCHPASIPSLTEALSN, and VRHEAAEALGSLGDCEGVEETLRKFLND. Residues H73, E74, H106, and E107 each contribute to the Fe cation site. Fe cation contacts are provided by H240, E241, H273, and E274.

Belongs to the deoxyhypusine hydroxylase family. Fe(2+) is required as a cofactor.

It localises to the cytoplasm. The protein resides in the nucleus. The catalysed reaction is [eIF5A protein]-deoxyhypusine + AH2 + O2 = [eIF5A protein]-hypusine + A + H2O. It participates in protein modification; eIF5A hypusination. Catalyzes the hydroxylation of the N(6)-(4-aminobutyl)-L-lysine intermediate to form hypusine, an essential post-translational modification only found in mature eIF-5A factor. The sequence is that of Deoxyhypusine hydroxylase (lia1) from Neosartorya fischeri (strain ATCC 1020 / DSM 3700 / CBS 544.65 / FGSC A1164 / JCM 1740 / NRRL 181 / WB 181) (Aspergillus fischerianus).